The chain runs to 278 residues: Polyamine aminopropyltransferase (278 aa).

The 234-residue stretch at 5–238 folds into the PABS domain; it reads ELWFTEQQTP…GLWSFTMGSK (234 aa). Gln-34 contacts S-methyl-5'-thioadenosine. Residues His-65 and Asp-89 each coordinate spermidine. S-methyl-5'-thioadenosine contacts are provided by residues Glu-109 and 140-141; that span reads DG. The active-site Proton acceptor is Asp-158. 158–161 lines the spermidine pocket; that stretch reads DSTD. Pro-165 contributes to the S-methyl-5'-thioadenosine binding site.

It belongs to the spermidine/spermine synthase family. In terms of assembly, homodimer or homotetramer.

The protein resides in the cytoplasm. It catalyses the reaction S-adenosyl 3-(methylsulfanyl)propylamine + putrescine = S-methyl-5'-thioadenosine + spermidine + H(+). It functions in the pathway amine and polyamine biosynthesis; spermidine biosynthesis; spermidine from putrescine: step 1/1. In terms of biological role, catalyzes the irreversible transfer of a propylamine group from the amino donor S-adenosylmethioninamine (decarboxy-AdoMet) to putrescine (1,4-diaminobutane) to yield spermidine. The protein is Polyamine aminopropyltransferase of Caldicellulosiruptor saccharolyticus (strain ATCC 43494 / DSM 8903 / Tp8T 6331).